Reading from the N-terminus, the 342-residue chain is (Lyso)-N-acylphosphatidylethanolamine lipase (342 aa).

The region spanning 70–323 (PLVMVHGFGG…EIEGASHHVY (254 aa)) is the AB hydrolase-1 domain.

It belongs to the peptidase S33 family. ABHD4/ABHD5 subfamily. Highest levels in the CNS and in testis, intermediate levels in liver and kidney. Hardly detectable in heart.

The catalysed reaction is N-hexadecanoyl-1,2-di-(9Z-octadecenoyl)-sn-glycero-3-phosphoethanolamine + H2O = N-hexadecanoyl-1-(9Z-octadecenoyl)-sn-glycero-3-phosphoethanolamine + (9Z)-octadecenoate + H(+). It carries out the reaction an N-acyl-1,2-diacyl-sn-glycero-3-phosphoethanolamine + H2O = N,1-diacyl-sn-glycero-3-phosphoethanolamine + a fatty acid + H(+). It catalyses the reaction N-hexadecanoyl-1-(9Z-octadecenoyl)-sn-glycero-3-phosphoethanolamine + H2O = N-hexadecanoyl-sn-glycero-3-phosphoethanolamine + (9Z)-octadecenoate + H(+). The enzyme catalyses N-octadecanoyl-1-(9Z-octadecenoyl)-sn-glycero-3-phosphoethanolamine + H2O = N-octadecanoyl-sn-glycero-3-phospho-ethanolamine + (9Z)-octadecenoate + H(+). The catalysed reaction is N-eicosanoyl-1-(9Z-octadecenoyl)-sn-glycero-3-phosphoethanolamine + H2O = N-eicosanoyl-sn-glycero-3-phosphoethanolamine + (9Z)-octadecenoate + H(+). It carries out the reaction N,1-di-(9Z-octadecenoyl)-sn-glycero-3-phosphoethanolamine + H2O = N-(9Z-octadecenoyl)-sn-glycero-3-phosphoethanolamine + (9Z)-octadecenoate + H(+). It catalyses the reaction N-(5Z,8Z,11Z,14Z-eicosatetraenoyl)-1-(9Z-octadecenoyl)-sn-glycero-3-phosphoethanolamine + H2O = N-(5Z,8Z,11Z,14Z-eicosatetraenoyl)-sn-glycero-3-phosphoethanolamine + (9Z)-octadecenoate + H(+). The enzyme catalyses 1-octadecanoyl-2-(9Z-octadecenoyl)-sn-glycero-3-phospho-(N-hexadecanoyl)-serine + H2O = 1-octadecanoyl-2-hydroxy-sn-glycero-3-phospho-(N-hexadecanoyl)-serine + (9Z)-octadecenoate + H(+). The catalysed reaction is 1-O-(1Z-octadecenoyl)-2-(9Z-octadecenoyl)-sn-glycero-3-phospho-N-hexadecanoyl-ethanolamine + H2O = 1-O-(1Z-octadecenyl)-sn-glycero-3-phospho-N-hexadecanoyl-ethanolamine + (9Z)-octadecenoate + H(+). It carries out the reaction N,1-diacyl-sn-glycero-3-phosphoethanolamine + H2O = N-acyl-sn-glycero-3-phosphoethanolamine + a fatty acid + H(+). Functionally, lysophospholipase selective for N-acyl phosphatidylethanolamine (NAPE). Contributes to the biosynthesis of N-acyl ethanolamines, including the endocannabinoid anandamide by hydrolyzing the sn-1 and sn-2 acyl chains from N-acyl phosphatidylethanolamine (NAPE) generating glycerophospho-N-acyl ethanolamine (GP-NAE), an intermediate for N-acyl ethanolamine biosynthesis. Hydrolyzes substrates bearing saturated, monounsaturated, polyunsaturated N-acyl chains. Shows no significant activity towards other lysophospholipids, including lysophosphatidylcholine, lysophosphatidylethanolamine and lysophosphatidylserine. In Mus musculus (Mouse), this protein is (Lyso)-N-acylphosphatidylethanolamine lipase.